A 356-amino-acid chain; its full sequence is UDP-3-O-acylglucosamine N-acyltransferase (356 aa).

The active-site Proton acceptor is H242.

Belongs to the transferase hexapeptide repeat family. LpxD subfamily. In terms of assembly, homotrimer.

It carries out the reaction a UDP-3-O-[(3R)-3-hydroxyacyl]-alpha-D-glucosamine + a (3R)-hydroxyacyl-[ACP] = a UDP-2-N,3-O-bis[(3R)-3-hydroxyacyl]-alpha-D-glucosamine + holo-[ACP] + H(+). It functions in the pathway bacterial outer membrane biogenesis; LPS lipid A biosynthesis. Functionally, catalyzes the N-acylation of UDP-3-O-acylglucosamine using 3-hydroxyacyl-ACP as the acyl donor. Is involved in the biosynthesis of lipid A, a phosphorylated glycolipid that anchors the lipopolysaccharide to the outer membrane of the cell. The chain is UDP-3-O-acylglucosamine N-acyltransferase from Acinetobacter baumannii (strain AB0057).